Reading from the N-terminus, the 29-residue chain is NAD(P)H-quinone oxidoreductase subunit 5, chloroplastic (29 aa).

The helical transmembrane segment at 1–15 (SGSIIHSMEANVGYS) threads the bilayer.

Belongs to the complex I subunit 5 family. In terms of assembly, NDH is composed of at least 16 different subunits, 5 of which are encoded in the nucleus.

The protein localises to the plastid. The protein resides in the chloroplast thylakoid membrane. The catalysed reaction is a plastoquinone + NADH + (n+1) H(+)(in) = a plastoquinol + NAD(+) + n H(+)(out). It carries out the reaction a plastoquinone + NADPH + (n+1) H(+)(in) = a plastoquinol + NADP(+) + n H(+)(out). Functionally, NDH shuttles electrons from NAD(P)H:plastoquinone, via FMN and iron-sulfur (Fe-S) centers, to quinones in the photosynthetic chain and possibly in a chloroplast respiratory chain. The immediate electron acceptor for the enzyme in this species is believed to be plastoquinone. Couples the redox reaction to proton translocation, and thus conserves the redox energy in a proton gradient. This chain is NAD(P)H-quinone oxidoreductase subunit 5, chloroplastic, found in Pseudotsuga menziesii (Douglas-fir).